Consider the following 337-residue polypeptide: AP2/ERF and B3 domain-containing transcription factor At1g50680 (337 aa).

A DNA-binding region (AP2/ERF) is located at residues Lys27 to Pro84. Positions Phe157 to Asn271 form a DNA-binding region, TF-B3.

Belongs to the AP2/ERF transcription factor family. RAV subfamily.

It is found in the nucleus. Probably acts as a transcriptional activator. Binds to the GCC-box pathogenesis-related promoter element. May be involved in the regulation of gene expression by stress factors and by components of stress signal transduction pathways. The chain is AP2/ERF and B3 domain-containing transcription factor At1g50680 from Arabidopsis thaliana (Mouse-ear cress).